A 191-amino-acid chain; its full sequence is Elongation factor P (191 aa).

It belongs to the elongation factor P family.

It localises to the cytoplasm. It participates in protein biosynthesis; polypeptide chain elongation. Involved in peptide bond synthesis. Stimulates efficient translation and peptide-bond synthesis on native or reconstituted 70S ribosomes in vitro. Probably functions indirectly by altering the affinity of the ribosome for aminoacyl-tRNA, thus increasing their reactivity as acceptors for peptidyl transferase. The protein is Elongation factor P of Bartonella henselae (strain ATCC 49882 / DSM 28221 / CCUG 30454 / Houston 1) (Rochalimaea henselae).